The primary structure comprises 256 residues: 1-(5-phosphoribosyl)-5-[(5-phosphoribosylamino)methylideneamino] imidazole-4-carboxamide isomerase (256 aa).

The Proton acceptor role is filled by Asp-8. Catalysis depends on Asp-129, which acts as the Proton donor.

This sequence belongs to the HisA/HisF family.

It is found in the cytoplasm. The enzyme catalyses 1-(5-phospho-beta-D-ribosyl)-5-[(5-phospho-beta-D-ribosylamino)methylideneamino]imidazole-4-carboxamide = 5-[(5-phospho-1-deoxy-D-ribulos-1-ylimino)methylamino]-1-(5-phospho-beta-D-ribosyl)imidazole-4-carboxamide. The protein operates within amino-acid biosynthesis; L-histidine biosynthesis; L-histidine from 5-phospho-alpha-D-ribose 1-diphosphate: step 4/9. The sequence is that of 1-(5-phosphoribosyl)-5-[(5-phosphoribosylamino)methylideneamino] imidazole-4-carboxamide isomerase from Synechococcus sp. (strain WH7803).